Reading from the N-terminus, the 430-residue chain is DNA damage-inducible protein DIN7 (430 aa).

An N-domain region spans residues 1–96 (MGIPGLLPQL…HTETRRRKKR (96 aa)). The Mg(2+) site is built by D30, D78, E150, D152, D171, D173, and D227. The segment at 114 to 247 (NAMEYFQKSV…VTAMKIVKRY (134 aa)) is I-domain.

This sequence belongs to the XPG/RAD2 endonuclease family. Mg(2+) is required as a cofactor.

The protein resides in the nucleus. 5'-&gt;3' double-stranded DNA exonuclease. In Saccharomyces cerevisiae (strain ATCC 204508 / S288c) (Baker's yeast), this protein is DNA damage-inducible protein DIN7 (DIN7).